Here is a 387-residue protein sequence, read N- to C-terminus: GTP-binding protein 10 (387 aa).

An Obg domain is found at 13-148 (GNFIDKLRLF…RIIHLDLKLI (136 aa)). The OBG-type G domain occupies 149–344 (ADVGLVGFPN…LKNCIRKSLD (196 aa)). Residues 155 to 162 (GFPNAGKS), 202 to 206 (DLPGL), and 278 to 281 (NKMD) each bind GTP.

The protein belongs to the TRAFAC class OBG-HflX-like GTPase superfamily. OBG GTPase family.

Its subcellular location is the nucleus. It localises to the nucleolus. The protein localises to the chromosome. Functionally, may be involved in the ribosome maturation process. Complements an ObgE(CgtA) function in E.coli ribosome maturation. Plays a role of GTPase in vitro. When missing, disorganization of the nucleolar architecture is observed. The sequence is that of GTP-binding protein 10 (GTPBP10) from Homo sapiens (Human).